A 139-amino-acid chain; its full sequence is Large ribosomal subunit protein uL16 (139 aa).

The protein belongs to the universal ribosomal protein uL16 family. As to quaternary structure, part of the 50S ribosomal subunit.

In terms of biological role, binds 23S rRNA and is also seen to make contacts with the A and possibly P site tRNAs. This Neorickettsia sennetsu (strain ATCC VR-367 / Miyayama) (Ehrlichia sennetsu) protein is Large ribosomal subunit protein uL16 (rplP).